A 43-amino-acid polypeptide reads, in one-letter code: Protein PsbN (43 aa).

A helical membrane pass occupies residues 7 to 27; it reads VAIFISGLLVSFTGYALYTAF.

Belongs to the PsbN family.

The protein resides in the plastid. It is found in the chloroplast thylakoid membrane. Functionally, may play a role in photosystem I and II biogenesis. In Sagittaria latifolia (Broadleaf arrowhead), this protein is Protein PsbN.